The sequence spans 61 residues: U-stichotoxin-Hcr1b (61 aa).

A signal peptide spans 1–19 (PILIFAFVMFAVMVNAKPS). The propeptide occupies 20 to 31 (IDDAEMKREPKP). Intrachain disulfides connect cysteine 38–cysteine 49 and cysteine 41–cysteine 56.

This sequence belongs to the Hau1a/HC18/HC19 family.

The protein localises to the secreted. Its subcellular location is the nematocyst. Its function is as follows. Toxin that is lethal to crab. Does not produce the typical symptoms associated with sodium channel toxins in crabs, suggesting that it likely does not act on sodium channels. The polypeptide is U-stichotoxin-Hcr1b (Radianthus crispa (Leathery sea anemone)).